A 609-amino-acid polypeptide reads, in one-letter code: Large ribosomal subunit assembly factor BipA (609 aa).

A tr-type G domain is found at 3–198 (QNIRNIAIIA…AIIKYAPAPN (196 aa)). GTP contacts are provided by residues 15–20 (DHGKTT) and 128–131 (NKID).

This sequence belongs to the TRAFAC class translation factor GTPase superfamily. Classic translation factor GTPase family. BipA subfamily. In terms of assembly, monomer.

It localises to the cytoplasm. The catalysed reaction is GTP + H2O = GDP + phosphate + H(+). In terms of biological role, a 50S ribosomal subunit assembly protein with GTPase activity, required for 50S subunit assembly at low temperatures, may also play a role in translation. Binds GTP and analogs. Binds the 70S ribosome between the 30S and 50S subunits, in a similar position as ribosome-bound EF-G; it contacts a number of ribosomal proteins, both rRNAs and the A-site tRNA. In Buchnera aphidicola subsp. Schizaphis graminum (strain Sg), this protein is Large ribosomal subunit assembly factor BipA.